A 126-amino-acid chain; its full sequence is Histone H2B 3 (126 aa).

The span at 1–12 (MPEPAKSAPAPK) shows a compositional bias: low complexity. The disordered stretch occupies residues 1–34 (MPEPAKSAPAPKKGSKKAVTKTQKKGDKKRRKTR). N6-acetyllysine is present on residues K6 and K13. The span at 13 to 34 (KGSKKAVTKTQKKGDKKRRKTR) shows a compositional bias: basic residues. Residue S15 is modified to Phosphoserine. An N6-acetyllysine mark is found at K16 and K21. An O-linked (GlcNAc) serine glycan is attached at S113. K121 participates in a covalent cross-link: Glycyl lysine isopeptide (Lys-Gly) (interchain with G-Cter in ubiquitin).

It belongs to the histone H2B family. The nucleosome is a histone octamer containing two molecules each of H2A, H2B, H3 and H4 assembled in one H3-H4 heterotetramer and two H2A-H2B heterodimers. The octamer wraps approximately 147 bp of DNA. Monoubiquitination of Lys-121 by the BRE1 gives a specific tag for epigenetic transcriptional activation and is also prerequisite for histone H3 'Lys-4' and 'Lys-79' methylation. In terms of processing, phosphorylated on Ser-15 during apoptosis; which facilitates apoptotic chromatin condensation. Post-translationally, glcNAcylation at Ser-113 promotes monoubiquitination of Lys-121. It fluctuates in response to extracellular glucose, and associates with transcribed genes.

It localises to the nucleus. The protein localises to the chromosome. Its function is as follows. Core component of nucleosome. Nucleosomes wrap and compact DNA into chromatin, limiting DNA accessibility to the cellular machineries which require DNA as a template. Histones thereby play a central role in transcription regulation, DNA repair, DNA replication and chromosomal stability. DNA accessibility is regulated via a complex set of post-translational modifications of histones, also called histone code, and nucleosome remodeling. The sequence is that of Histone H2B 3 (hist2h2l) from Danio rerio (Zebrafish).